Reading from the N-terminus, the 91-residue chain is Small ribosomal subunit protein uS15 (91 aa).

The protein belongs to the universal ribosomal protein uS15 family. In terms of assembly, part of the 30S ribosomal subunit. Forms a bridge to the 50S subunit in the 70S ribosome, contacting the 23S rRNA.

In terms of biological role, one of the primary rRNA binding proteins, it binds directly to 16S rRNA where it helps nucleate assembly of the platform of the 30S subunit by binding and bridging several RNA helices of the 16S rRNA. Forms an intersubunit bridge (bridge B4) with the 23S rRNA of the 50S subunit in the ribosome. The polypeptide is Small ribosomal subunit protein uS15 (Rickettsia akari (strain Hartford)).